The primary structure comprises 111 residues: Disintegrin Eo1 subunit 1 (111 aa).

An N-terminal signal peptide occupies residues 1–20 (MIQVLLVIICLAVFPYQGSS). The propeptide occupies 21-46 (IILESGNVNDFELVYPKKVTVLPTGA). Residues 26-111 (GNVNDFELVY…SDCPRNPWKD (86 aa)) enclose the Disintegrin domain. Disulfide bonds link cysteine 53–cysteine 76, cysteine 67–cysteine 73, cysteine 72–cysteine 97, and cysteine 85–cysteine 104. Positions 89–91 (WGD) match the Cell attachment site; atypical (WGD) motif. Positions 110-111 (KD) are excised as a propeptide.

Belongs to the disintegrin family. Dimeric disintegrin subfamily. Heterodimer; disulfide-linked. In terms of tissue distribution, expressed by the venom gland.

The protein localises to the secreted. Its function is as follows. Poor inhibitor of platelet aggregation. The disintegrin inhibits the adhesion of cells expressing the RGD-dependent integrin alpha-5/beta-1 (ITGA5/ITGB1) to immobilized fibronectin. Inhibition on alpha-IIb/beta-3 (ITGA2B/ITGB3) is low. In Echis ocellatus (Ocellated saw-scaled viper), this protein is Disintegrin Eo1 subunit 1.